The following is a 469-amino-acid chain: UDP-N-acetylmuramate--L-alanine ligase (469 aa).

Position 112-118 (112-118 (GTHGKTT)) interacts with ATP.

Belongs to the MurCDEF family.

The protein resides in the cytoplasm. It carries out the reaction UDP-N-acetyl-alpha-D-muramate + L-alanine + ATP = UDP-N-acetyl-alpha-D-muramoyl-L-alanine + ADP + phosphate + H(+). The protein operates within cell wall biogenesis; peptidoglycan biosynthesis. In terms of biological role, cell wall formation. This is UDP-N-acetylmuramate--L-alanine ligase from Methylibium petroleiphilum (strain ATCC BAA-1232 / LMG 22953 / PM1).